Consider the following 891-residue polypeptide: MNKHHPKLRSFYSIRKSTLGVASVIVSTLFLITSQHQAQAAENTNTSDKISENQNNNATTTQQPKDTNQTQPATQPVITAKNYPAADESLKDAIKDPALENKEHDIGPREQVNFQLLDKNNETQYYHFFSIKDPADVYYTKKKAEVELDINTASTWKKFEVYENNQKLPVRLVSYSPVPEDHAYIRFPVSDGTQELKIVSSTQIDDGEETNYDYTKLVFAKPIYNDPSLVKSDTNDAVVTNDQSSSDASNQTNTNTSNQNTSTTNNANNQPQATTNMSQPAQPKSSANADQASSQPAHETNSNGNTNDKTNESSNQSDVNQQYPPADESLQDAIKNPAIIDKEHTADNWRPIDFQMKNDKGERQFYHYASTVEPATVIFTKTGPVIELGLKTASTWKKFEVYEGDKKLPVELVSYDSDKDYAYIRFPVSNGTRDVKNVSSIEYGENIHEDYDYTLMVFAQPITNNPDDYVDEETYNLQKLLAPYHKAKTLERQVYELEKLQEKLPEKYKAEYKKKLDQTRVELADQVKSAVTEFENVTPTNDQLTDLQEAHFVVFESEENSESVMDGFVEHPFYTATLNGQKYVVMKTKDDSYWKDLIVEGKRVTTVSKDPKNNSRTLIFPYIPDKAVYNAIVKVVVANIGYEGQYHVRIINQDINTKDDDTSQNNTSEPLNVQTGQEGKVADTDVAENSSTATNPKDASDKADVIEPESDVVKDADNNIDKDVQHDVDHLSDMSDNNHFDKYDLKEMDTQIAKDTDRNVDNSVGMSSNVDTDKDSNKNKDKVIQLAHIADKNNHTGKAAKLDVVKQNYNNTDKVTDKKTTEHLPSDIHKTVDKTVKTKEKAGTPSKENKLSQSKMLPKTGETTSSQSWWGLYALLGMLALFIPKFRKESK.

The signal sequence occupies residues 1-40; that stretch reads MNKHHPKLRSFYSIRKSTLGVASVIVSTLFLITSQHQAQA. Positions 42-77 are disordered; sequence ENTNTSDKISENQNNNATTTQQPKDTNQTQPATQPV. The segment covering 53–63 has biased composition (low complexity); it reads NQNNNATTTQQ. The segment covering 64-77 has biased composition (polar residues); sequence PKDTNQTQPATQPV. Residues 105–232 enclose the NEAT 1 domain; the sequence is DIGPREQVNF…IYNDPSLVKS (128 aa). The segment at 239–324 is disordered; sequence VTNDQSSSDA…NQSDVNQQYP (86 aa). Positions 240 to 276 are enriched in low complexity; that stretch reads TNDQSSSDASNQTNTNTSNQNTSTTNNANNQPQATTN. Positions 277-323 are enriched in polar residues; that stretch reads MSQPAQPKSSANADQASSQPAHETNSNGNTNDKTNESSNQSDVNQQY. NEAT domains follow at residues 345–471 and 543–660; these read TADN…DYVD and QLTD…TKDD. Disordered stretches follow at residues 657-718, 752-777, and 835-864; these read TKDD…DADN, IAKD…KDSN, and TVKT…GETT. Composition is skewed to polar residues over residues 663 to 677 and 687 to 697; these read SQNN…QTGQ and AENSSTATNPK. The span at 698–718 shows a compositional bias: basic and acidic residues; that stretch reads DASDKADVIEPESDVVKDADN. Residues 835-850 are compositionally biased toward basic and acidic residues; the sequence is TVKTKEKAGTPSKENK. Polar residues predominate over residues 851–864; the sequence is LSQSKMLPKTGETT. The LPXTG sorting signal signature appears at 857 to 861; the sequence is LPKTG. A Pentaglycyl murein peptidoglycan amidated threonine modification is found at Thr860. A propeptide spans 861-891 (removed by sortase); the sequence is GETTSSQSWWGLYALLGMLALFIPKFRKESK.

Belongs to the IsdH family.

It is found in the secreted. The protein resides in the cell wall. Its function is as follows. Binds human plasma haptoglobin-hemoglobin complexes, haptoglobin and hemoglobin. Binds haptoglobin-hemoglobin complexes with significantly higher affinity than haptoglobin alone. The chain is Iron-regulated surface determinant protein H (isdH) from Staphylococcus aureus (strain N315).